Consider the following 128-residue polypeptide: MILGLGLDVVEVARIQRILAGPPARAERFLARVFAPAERAYCDARQDRATRYAARFAAKEAAVKALGTPEGVRWLDLVVERGGGAPSLVLDGIAADAARRLGVARVHLTLTHDGGVAVAAVILEGTGP.

Residues aspartate 8 and glutamate 60 each contribute to the Mg(2+) site.

Belongs to the P-Pant transferase superfamily. AcpS family. It depends on Mg(2+) as a cofactor.

The protein localises to the cytoplasm. The enzyme catalyses apo-[ACP] + CoA = holo-[ACP] + adenosine 3',5'-bisphosphate + H(+). Its function is as follows. Transfers the 4'-phosphopantetheine moiety from coenzyme A to a Ser of acyl-carrier-protein. The protein is Holo-[acyl-carrier-protein] synthase of Anaeromyxobacter dehalogenans (strain 2CP-1 / ATCC BAA-258).